A 69-amino-acid chain; its full sequence is Proteinase inhibitor (69 aa).

Residue Ser-1 is modified to N-acetylserine. Cysteines 4 and 49 form a disulfide.

Functionally, in vitro, strong inhibitor of bovine beta-trypsin, weak inhibitor of alpha-chymotrypsin, subtilisin BPN', subtilisin Carlsberg and cathepsin G. This Linum usitatissimum (Flax) protein is Proteinase inhibitor.